A 363-amino-acid polypeptide reads, in one-letter code: Succinyl-diaminopimelate desuccinylase (363 aa).

His63 is a binding site for Zn(2+). Asp65 is a catalytic residue. Residue Asp94 coordinates Zn(2+). The active-site Proton acceptor is Glu123. Zn(2+)-binding residues include Glu124, Glu152, and His337.

This sequence belongs to the peptidase M20A family. DapE subfamily. Homodimer. Requires Zn(2+) as cofactor. Co(2+) serves as cofactor.

It catalyses the reaction N-succinyl-(2S,6S)-2,6-diaminopimelate + H2O = (2S,6S)-2,6-diaminopimelate + succinate. It participates in amino-acid biosynthesis; L-lysine biosynthesis via DAP pathway; LL-2,6-diaminopimelate from (S)-tetrahydrodipicolinate (succinylase route): step 3/3. Catalyzes the hydrolysis of N-succinyl-L,L-diaminopimelic acid (SDAP), forming succinate and LL-2,6-diaminopimelate (DAP), an intermediate involved in the bacterial biosynthesis of lysine and meso-diaminopimelic acid, an essential component of bacterial cell walls. This chain is Succinyl-diaminopimelate desuccinylase, found in Campylobacter concisus (strain 13826).